The primary structure comprises 70 residues: DNA-directed RNA polymerases I, II, and III subunit rpabc5 (70 aa).

Zn(2+)-binding residues include C7, C10, C44, and C45.

This sequence belongs to the archaeal Rpo10/eukaryotic RPB10 RNA polymerase subunit family. In terms of assembly, component of the RNA polymerase I (Pol I), RNA polymerase II (Pol II) and RNA polymerase III (Pol III) complexes.

The protein localises to the nucleus. DNA-dependent RNA polymerase catalyzes the transcription of DNA into RNA using the four ribonucleoside triphosphates as substrates. Common component of RNA polymerases I, II and III which synthesize ribosomal RNA precursors, mRNA precursors and many functional non-coding RNAs, and a small RNAs, such as 5S rRNA and tRNAs, respectively. Pol II is the central component of the basal RNA polymerase II transcription machinery. Pols are composed of mobile elements that move relative to each other. In Pol II, RBP10 is part of the core element with the central large cleft. This chain is DNA-directed RNA polymerases I, II, and III subunit rpabc5 (polr2l), found in Dictyostelium discoideum (Social amoeba).